Here is a 202-residue protein sequence, read N- to C-terminus: Putative 3-methyladenine DNA glycosylase (202 aa).

This sequence belongs to the DNA glycosylase MPG family.

The polypeptide is Putative 3-methyladenine DNA glycosylase (Clostridioides difficile (strain 630) (Peptoclostridium difficile)).